Here is a 348-residue protein sequence, read N- to C-terminus: Holliday junction branch migration complex subunit RuvB (348 aa).

Residues 1–183 form a large ATPase domain (RuvB-L) region; it reads MTDPSRLVTP…FGIPVRLNFY (183 aa). ATP is bound by residues Leu22, Arg23, Gly64, Lys67, Thr68, Thr69, 130 to 132, Arg173, Tyr183, and Arg220; that span reads EDF. Thr68 serves as a coordination point for Mg(2+). The small ATPAse domain (RuvB-S) stretch occupies residues 184 to 254; sequence TIEELESIVS…IADHALGALE (71 aa). The head domain (RuvB-H) stretch occupies residues 257–348; that stretch reads AAGLDAMDRR…FGLFGGEEEA (92 aa). The DNA site is built by Arg293, Arg312, and Arg317.

It belongs to the RuvB family. In terms of assembly, homohexamer. Forms an RuvA(8)-RuvB(12)-Holliday junction (HJ) complex. HJ DNA is sandwiched between 2 RuvA tetramers; dsDNA enters through RuvA and exits via RuvB. An RuvB hexamer assembles on each DNA strand where it exits the tetramer. Each RuvB hexamer is contacted by two RuvA subunits (via domain III) on 2 adjacent RuvB subunits; this complex drives branch migration. In the full resolvosome a probable DNA-RuvA(4)-RuvB(12)-RuvC(2) complex forms which resolves the HJ.

Its subcellular location is the cytoplasm. The enzyme catalyses ATP + H2O = ADP + phosphate + H(+). Functionally, the RuvA-RuvB-RuvC complex processes Holliday junction (HJ) DNA during genetic recombination and DNA repair, while the RuvA-RuvB complex plays an important role in the rescue of blocked DNA replication forks via replication fork reversal (RFR). RuvA specifically binds to HJ cruciform DNA, conferring on it an open structure. The RuvB hexamer acts as an ATP-dependent pump, pulling dsDNA into and through the RuvAB complex. RuvB forms 2 homohexamers on either side of HJ DNA bound by 1 or 2 RuvA tetramers; 4 subunits per hexamer contact DNA at a time. Coordinated motions by a converter formed by DNA-disengaged RuvB subunits stimulates ATP hydrolysis and nucleotide exchange. Immobilization of the converter enables RuvB to convert the ATP-contained energy into a lever motion, pulling 2 nucleotides of DNA out of the RuvA tetramer per ATP hydrolyzed, thus driving DNA branch migration. The RuvB motors rotate together with the DNA substrate, which together with the progressing nucleotide cycle form the mechanistic basis for DNA recombination by continuous HJ branch migration. Branch migration allows RuvC to scan DNA until it finds its consensus sequence, where it cleaves and resolves cruciform DNA. This chain is Holliday junction branch migration complex subunit RuvB, found in Rhodopseudomonas palustris (strain HaA2).